A 1949-amino-acid chain; its full sequence is Protein GREB1 (1949 aa).

Disordered regions lie at residues 52–77, 302–334, and 1085–1210; these read EGGS…GPPN, ILSN…GGGN, and EALE…GQRS. Positions 59–68 are enriched in acidic residues; sequence NEEEEEEGEG. Basic and acidic residues-rich tracts occupy residues 1085-1095 and 1110-1126; these read EALESDAEKLS and TSEK…RSHD. A compositionally biased stretch (low complexity) spans 1127 to 1147; sequence SASSSLSSKASGSALGGESSA. Positions 1166 to 1178 are enriched in basic and acidic residues; sequence PAEEGRAPGEKQR. A helical membrane pass occupies residues 1868 to 1888; sequence DLLFSGLLLYLCDSFVGASFL.

Belongs to the GREB1 family. As to expression, expressed in proliferating prostatic tissue and prostate cancer.

The protein localises to the membrane. May play a role in estrogen-stimulated cell proliferation. Acts as a regulator of hormone-dependent cancer growth in breast and prostate cancers. This Homo sapiens (Human) protein is Protein GREB1 (GREB1).